Here is a 133-residue protein sequence, read N- to C-terminus: Small ribosomal subunit protein uS8 (133 aa).

The protein belongs to the universal ribosomal protein uS8 family. Part of the 30S ribosomal subunit. Contacts proteins S5 and S12.

Functionally, one of the primary rRNA binding proteins, it binds directly to 16S rRNA central domain where it helps coordinate assembly of the platform of the 30S subunit. This chain is Small ribosomal subunit protein uS8, found in Koribacter versatilis (strain Ellin345).